The following is a 183-amino-acid chain: Large ribosomal subunit protein uL10 (183 aa).

The protein belongs to the universal ribosomal protein uL10 family. In terms of assembly, part of the ribosomal stalk of the 50S ribosomal subunit. The N-terminus interacts with L11 and the large rRNA to form the base of the stalk. The C-terminus forms an elongated spine to which L12 dimers bind in a sequential fashion forming a multimeric L10(L12)X complex.

Its function is as follows. Forms part of the ribosomal stalk, playing a central role in the interaction of the ribosome with GTP-bound translation factors. The polypeptide is Large ribosomal subunit protein uL10 (Mesomycoplasma hyopneumoniae (strain 7448) (Mycoplasma hyopneumoniae)).